The chain runs to 203 residues: Monothiol glutaredoxin-7 (203 aa).

The signal sequence occupies residues Met-1–Ala-32. In terms of domain architecture, Glutaredoxin spans Ala-88 to Ala-191. Cys-108 contacts [2Fe-2S] cluster.

This sequence belongs to the glutaredoxin family. Monothiol subfamily.

This chain is Monothiol glutaredoxin-7 (GRX7), found in Saccharomyces cerevisiae (strain ATCC 204508 / S288c) (Baker's yeast).